The primary structure comprises 47 residues: Delta-actitoxin-Axm1g (47 aa).

Disulfide bonds link cysteine 4/cysteine 44, cysteine 6/cysteine 34, and cysteine 27/cysteine 45.

This sequence belongs to the sea anemone sodium channel inhibitory toxin family. Type I subfamily.

It localises to the secreted. The protein resides in the nematocyst. This chain is Delta-actitoxin-Axm1g, found in Anthopleura xanthogrammica (Giant green sea anemone).